The sequence spans 134 residues: Fatty acid-binding protein, muscle (134 aa).

Residues R109 and 129 to 131 (RIY) contribute to the (9Z)-octadecenoate site.

The protein belongs to the calycin superfamily. Fatty-acid binding protein (FABP) family. Monomer. In terms of tissue distribution, adult flight muscle.

It is found in the cytoplasm. Its function is as follows. Binds fatty acids in a 1:1 molar ratio. This chain is Fatty acid-binding protein, muscle, found in Schistocerca gregaria (Desert locust).